The following is a 1182-amino-acid chain: Exocyst complex component 4 (1182 aa).

Residues 236-250 (NKNSNSNNSNNTFKS) show a composition bias toward low complexity. Disordered stretches follow at residues 236–262 (NKNS…PFKP), 376–427 (IPKM…SSNI), 525–545 (EETE…PKPT), and 921–968 (QQQQ…GSNN). Over residues 392 to 409 (GSNGGGNNSMNGSGGING) the composition is skewed to gly residues. Residues 410 to 426 (NGSTASSSSPTSSTSSN) show a composition bias toward low complexity. A compositionally biased stretch (low complexity) spans 921 to 932 (QQQQQQQQQQQQ). Residues 933-968 (VDSIKTPSKLNSGINSGGNSTASNKENNSTTTGSNN) are compositionally biased toward polar residues.

This sequence belongs to the SEC8 family. In terms of assembly, the exocyst complex is composed of sec3/exoc1, sec5/exoc2, sec6/exoc3, sec8/exoc4, sec10/exoc5, sec15/exoc6, exo70/exoc7 and exo84/exoc8.

The protein localises to the midbody. Its subcellular location is the midbody ring. It localises to the cell projection. The protein resides in the cytoplasm. It is found in the cytoskeleton. The protein localises to the microtubule organizing center. Its subcellular location is the centrosome. Component of the exocyst complex involved in the docking of exocytic vesicles with fusion sites on the plasma membrane. The sequence is that of Exocyst complex component 4 (exoc4) from Dictyostelium discoideum (Social amoeba).